Reading from the N-terminus, the 209-residue chain is Uracil phosphoribosyltransferase (209 aa).

Residues Arg-79, Arg-104, and 131 to 139 contribute to the 5-phospho-alpha-D-ribose 1-diphosphate site; that span reads DPMLATGGS. Uracil is bound by residues Ile-194 and 199–201; that span reads GDA. A 5-phospho-alpha-D-ribose 1-diphosphate-binding site is contributed by Asp-200.

This sequence belongs to the UPRTase family. Mg(2+) serves as cofactor.

The enzyme catalyses UMP + diphosphate = 5-phospho-alpha-D-ribose 1-diphosphate + uracil. Its pathway is pyrimidine metabolism; UMP biosynthesis via salvage pathway; UMP from uracil: step 1/1. Its activity is regulated as follows. Allosterically activated by GTP. Functionally, catalyzes the conversion of uracil and 5-phospho-alpha-D-ribose 1-diphosphate (PRPP) to UMP and diphosphate. The polypeptide is Uracil phosphoribosyltransferase (Clostridium perfringens (strain ATCC 13124 / DSM 756 / JCM 1290 / NCIMB 6125 / NCTC 8237 / Type A)).